The following is a 416-amino-acid chain: MHRKGGQTLRLYTHFLLHLSPHHHSFLDSIWQRKMVHPSSAFHPYTRPIPTTSGHDLPVDDSLRLLLSAEALIALAQLQDASKILPSYEPVKDFSPQLLPAMTPTPIIATPSIPEQPQPLQSPSAPNEKSRRKRTTFSPEQATRLEAEYIGDSYMAREKRHLLAQSLKLSENQVKTWFQNRRAKDKRDRKSENASNHTSNSRRSSPSRKSSSDSTPTPTQATQFDMPTQIQTASPPTTADSAIFPPTSPESIIQKIEQFPSNQILPNFDILQTYLQSLSSSQIPLQFVPSTPPLFDPNMLQLYHVIFEFSQSETCSVSFQRNSASNMRSLLIFVFFATIFAVDAQYDSADSSQSEDLPDIAPESVSSEEIIEVDVNIEGSGSGDGPIIDQVHMFGILPGPGDIRKKRGILEILGRK.

The span at 103–113 shows a compositional bias: low complexity; the sequence is TPTPIIATPSI. 2 disordered regions span residues 103–144 and 178–247; these read TPTP…QATR and FQNR…FPPT. Residues 118–127 show a composition bias toward polar residues; it reads QPLQSPSAPN. Positions 130 to 189 form a DNA-binding region, homeobox; the sequence is SRRKRTTFSPEQATRLEAEYIGDSYMAREKRHLLAQSLKLSENQVKTWFQNRRAKDKRDR. Over residues 193–218 the composition is skewed to low complexity; that stretch reads NASNHTSNSRRSSPSRKSSSDSTPTP. Residues 219 to 240 are compositionally biased toward polar residues; sequence TQATQFDMPTQIQTASPPTTAD.

The protein resides in the nucleus. In Caenorhabditis elegans, this protein is Homeobox protein ceh-62.